The following is a 295-amino-acid chain: Putative S-adenosyl-L-methionine-dependent methyltransferase Mvan_0910 (295 aa).

S-adenosyl-L-methionine contacts are provided by residues Asp-126 and 155 to 156 (DL).

It belongs to the UPF0677 family.

Its function is as follows. Exhibits S-adenosyl-L-methionine-dependent methyltransferase activity. In Mycolicibacterium vanbaalenii (strain DSM 7251 / JCM 13017 / BCRC 16820 / KCTC 9966 / NRRL B-24157 / PYR-1) (Mycobacterium vanbaalenii), this protein is Putative S-adenosyl-L-methionine-dependent methyltransferase Mvan_0910.